Consider the following 622-residue polypeptide: Microtubule-associated protein 70-1 (622 aa).

The segment at 1-27 (MSDVSADGGFLSAEQATTPVAIPTPYP) is disordered. Residues 66–365 (DPVKVELNRL…LAISDRAAKS (300 aa)) adopt a coiled-coil conformation. Positions 250–483 (ILDRMHRQKV…YSFNKACDET (234 aa)) are required for targeting to microtubules. Disordered stretches follow at residues 388–512 (SSIS…TEDN) and 579–622 (AAMR…RSTQ). Polar residues-rich tracts occupy residues 400–425 (SMSN…SNGF) and 432–453 (MRNS…TSKS). Composition is skewed to basic and acidic residues over residues 479-501 (ACDE…EKPP) and 579-591 (AAMR…DNRA). The stretch at 541–590 (DKDDAIEMLAKKVETLTKAMEVEAKKMRREVAAMEKEVAAMRVDKDQDNR) forms a coiled coil. The segment covering 594–605 (SSNTKPSSNTAQ) has biased composition (polar residues).

It belongs to the MAP70 family. Interacts with MAP70.5 and itself.

It localises to the cytoplasm. The protein resides in the cytoskeleton. The protein localises to the phragmoplast. It is found in the spindle. Its function is as follows. Plant-specific protein that interact with microtubules. In association with MAP70.5, is essential for the normal banding pattern of secondary cell wall and for the proper development of xylem tracheary elements and wood formation. This Arabidopsis thaliana (Mouse-ear cress) protein is Microtubule-associated protein 70-1 (MAP70.1).